The following is a 284-amino-acid chain: MAIIMDGKALAVNMQEQLQEKVARLKEKEWIVPGLVVIMVGENPASQVYVRNKERAAKKAGFHSKTVNLSESISEEELIEVIEKYNQDPLFHGILVQLPLPNHISEMRILLAIDPKKDVDGFHPMNTGNLWNGRPQMVPCTPAGIMEILREYNVELEGKTAVIIGRSNIVGKPMAQLLLEKNATVTLTHSRTPHLAKVCNKADVLIVAIGRAKFVTEEFVKEGAVVIDVGINRDEEGKLCGDVDFDQVKEKVSMITPVPGGVGPMTITMLMEQTYQAALRSLKG.

NADP(+)-binding positions include 165-167, Ser190, and Ile231; that span reads GRS.

It belongs to the tetrahydrofolate dehydrogenase/cyclohydrolase family. In terms of assembly, homodimer.

The enzyme catalyses (6R)-5,10-methylene-5,6,7,8-tetrahydrofolate + NADP(+) = (6R)-5,10-methenyltetrahydrofolate + NADPH. It catalyses the reaction (6R)-5,10-methenyltetrahydrofolate + H2O = (6R)-10-formyltetrahydrofolate + H(+). It functions in the pathway one-carbon metabolism; tetrahydrofolate interconversion. In terms of biological role, catalyzes the oxidation of 5,10-methylenetetrahydrofolate to 5,10-methenyltetrahydrofolate and then the hydrolysis of 5,10-methenyltetrahydrofolate to 10-formyltetrahydrofolate. The protein is Bifunctional protein FolD of Streptococcus thermophilus (strain ATCC BAA-250 / LMG 18311).